Consider the following 216-residue polypeptide: Probable GTP-binding protein EngB (216 aa).

The EngB-type G domain occupies E26–P200. GTP contacts are provided by residues G34–S41, G61–L65, D79–G82, T146–D149, and Y179–S181. The Mg(2+) site is built by S41 and T63.

It belongs to the TRAFAC class TrmE-Era-EngA-EngB-Septin-like GTPase superfamily. EngB GTPase family. It depends on Mg(2+) as a cofactor.

Its function is as follows. Necessary for normal cell division and for the maintenance of normal septation. The chain is Probable GTP-binding protein EngB from Vibrio vulnificus (strain YJ016).